We begin with the raw amino-acid sequence, 352 residues long: Quinolinate synthase (352 aa).

Iminosuccinate-binding residues include H55 and S72. Residue C117 coordinates [4Fe-4S] cluster. Iminosuccinate-binding positions include Y143–N145 and S160. C204 lines the [4Fe-4S] cluster pocket. Residues H230–E232 and T258 contribute to the iminosuccinate site. C303 contributes to the [4Fe-4S] cluster binding site.

Belongs to the quinolinate synthase family. Type 2 subfamily. [4Fe-4S] cluster is required as a cofactor.

The protein localises to the cytoplasm. It catalyses the reaction iminosuccinate + dihydroxyacetone phosphate = quinolinate + phosphate + 2 H2O + H(+). The protein operates within cofactor biosynthesis; NAD(+) biosynthesis; quinolinate from iminoaspartate: step 1/1. In terms of biological role, catalyzes the condensation of iminoaspartate with dihydroxyacetone phosphate to form quinolinate. The protein is Quinolinate synthase of Mycobacterium leprae (strain Br4923).